The chain runs to 874 residues: Leucine--tRNA ligase (874 aa).

The 'HIGH' region motif lies at 47-57 (PYPSGKLHMGH). A 'KMSKS' region motif is present at residues 636–640 (KMSKS). Residue Lys-639 participates in ATP binding.

The protein belongs to the class-I aminoacyl-tRNA synthetase family.

The protein resides in the cytoplasm. The enzyme catalyses tRNA(Leu) + L-leucine + ATP = L-leucyl-tRNA(Leu) + AMP + diphosphate. This is Leucine--tRNA ligase from Acinetobacter baumannii (strain AB0057).